A 1529-amino-acid polypeptide reads, in one-letter code: Myosin-11 (1529 aa).

Positions 11-60 constitute a Myosin N-terminal SH3-like domain; that stretch reads IVGSHVWIEDSDVAWIDGLVEKINGQDVEVQATNGKKITAKLSKIYPKDM. Positions 65-735 constitute a Myosin motor domain; that stretch reads GGVDDMTKLS…QMAELDARRT (671 aa). ATP contacts are provided by residues 159–166 and 212–220; these read GESGAGKT and NNNSSRFGK. Actin-binding regions lie at residues 498–532, 534–557, 592–616, and 616–638; these read LIEKKPGGIVALLDEACMFPKSTHETFANKLYQTF, THKRFIKPKLSRTDFAVAHYAGEV, FPPLPEETSKSSKFSSIGSRFKLQL, and LQQLMETLNSTEPHYIRCVKPNN. 6 consecutive IQ domains span residues 738–767, 761–790, 786–815, 809–838, 834–863, and 857–886; these read LSAAAKKIQRRIRTHQAQRRFILLRKATIS, LRKATISLQALCRGRLSSKIFDNLRRQAAA, RQAAAVKIQKNARRLHSRKSYKNLHVAALV, LHVAALVVQTGLRAMAAHKQFRFRKQTKAA, QTKAATTIQAQFRCHRATLYFKKLKKGVIL, and LKKGVILSQTRWRGKLARRELRQLKMASRE. The stretch at 887–1059 forms a coiled coil; sequence TGALKEAKDM…VLRQQAVSIA (173 aa). A compositionally biased stretch (basic and acidic residues) spans 993-1027; the sequence is EQEKQRADDATRKFDEAQESSEDRKKKLEDTEKKA. Disordered regions lie at residues 993–1031 and 1096–1115; these read EQEKQRADDATRKFDEAQESSEDRKKKLEDTEKKAQQLQ and INRRDLSEVDDKPQKSLNEK. Positions 1163 to 1472 constitute a Dilute domain; it reads DRIIQTIGQA…IANMRVLMTE (310 aa).

Belongs to the TRAFAC class myosin-kinesin ATPase superfamily. Myosin family. Plant myosin class XI subfamily. Homodimer.

Its subcellular location is the cytoplasm. Functionally, myosin heavy chain that is required for the cell cycle-regulated transport of various organelles and proteins for their segregation. Functions by binding with its tail domain to receptor proteins on organelles and exerting force with its N-terminal motor domain against actin filaments, thereby transporting its cargo along polarized actin cables. Involved in trafficking of Golgi stacks, mitochondria and peroxisomes. This Arabidopsis thaliana (Mouse-ear cress) protein is Myosin-11 (XI-E).